The sequence spans 387 residues: Oxidase FUB9 (387 aa).

Positions 1 to 20 (MSRTNLPIQPAKMSDATSSK) are disordered. The 362-residue stretch at 18-379 (SSKPQIFSIQ…TPAHLSLLNA (362 aa)) folds into the FMN hydroxy acid dehydrogenase domain. Tyr44 provides a ligand contact to a 2-oxocarboxylate. The FMN site is built by Ser126, Gln150, and Thr178. Arg187 contributes to the a 2-oxocarboxylate binding site. Lys250 lines the FMN pocket. The Proton acceptor role is filled by His274. Arg277 serves as a coordination point for a 2-oxocarboxylate. FMN-binding positions include 305 to 309 (DGGFR) and 328 to 329 (GR).

Belongs to the FMN-dependent alpha-hydroxy acid dehydrogenase family. The cofactor is FMN.

It functions in the pathway mycotoxin biosynthesis. In terms of biological role, oxidase; part of the gene cluster that mediates the biosynthesis of fusaric acid, a mycotoxin with low to moderate toxicity to animals and humans, but with high phytotoxic properties. L-aspartate is suggested as fusaric acid amino acid precursor that is activated and further processed to O-acetyl-L-homoserine by cluster enzymes aspartate kinase FUB3 and homoserine O-acetyltransferase FUB5, as well as enzymes of the primary metabolism. The polyketide synthase (PKS) FUB1 generates the triketide trans-2-hexenal which is presumptively released by the hydrolase FUB4 and linked to the NRPS-bound amino acid precursor by NAD(P)-dependent dehydrogenase FUB6. FUB1, FUB4, and the non-canonical NRPS Fub8 may form an enzyme complex. Further processing of the NRPS-bound intermediate might be carried out by FUB6 and the sulfhydrylase FUB7, enabling a spontaneous electrocyclization to close the carbon backbone of fusaric acid. Dihydrofusaric acid is likely to be released via reduction by the thioester reductase (TR) domain of FUB8 whereupon the final oxidation to fusaric acid may (also) be performed by the FMN-dependent dehydrogenase FUB9. The chain is Oxidase FUB9 from Gibberella moniliformis (strain M3125 / FGSC 7600) (Maize ear and stalk rot fungus).